We begin with the raw amino-acid sequence, 384 residues long: Chaperone protein DnaJ (384 aa).

Residues 5–70 form the J domain; that stretch reads DYYEILGVTR…QKKRIYDTYG (66 aa). A CR-type zinc finger spans residues 134-212; it reads GTEKEIRLQT…CNGQGRTRQS (79 aa). The Zn(2+) site is built by C147, C150, C164, C167, C186, C189, C200, and C203. 4 CXXCXGXG motif repeats span residues 147–154, 164–171, 186–193, and 200–207; these read CEECNGSG, CPVCQGSG, CTRCQGMG, and CKTCNGQG. The tract at residues 352 to 384 is disordered; it reads KEKSGEKVRKWPWSKRKDREKKSMAESTREART.

Belongs to the DnaJ family. Homodimer. Zn(2+) serves as cofactor.

The protein localises to the cytoplasm. Its function is as follows. Participates actively in the response to hyperosmotic and heat shock by preventing the aggregation of stress-denatured proteins and by disaggregating proteins, also in an autonomous, DnaK-independent fashion. Unfolded proteins bind initially to DnaJ; upon interaction with the DnaJ-bound protein, DnaK hydrolyzes its bound ATP, resulting in the formation of a stable complex. GrpE releases ADP from DnaK; ATP binding to DnaK triggers the release of the substrate protein, thus completing the reaction cycle. Several rounds of ATP-dependent interactions between DnaJ, DnaK and GrpE are required for fully efficient folding. Also involved, together with DnaK and GrpE, in the DNA replication of plasmids through activation of initiation proteins. This is Chaperone protein DnaJ from Syntrophobacter fumaroxidans (strain DSM 10017 / MPOB).